Reading from the N-terminus, the 419-residue chain is Structure-specific endonuclease subunit slx4 (419 aa).

The protein belongs to the SLX4 family. Forms a heterodimer with slx1. Post-translationally, phosphorylated in response to DNA damage.

It localises to the nucleus. It is found in the nucleolus. Regulatory subunit of the slx1-slx4 structure-specific endonuclease that resolves DNA secondary structures generated during DNA repair and recombination. Has endonuclease activity towards branched DNA substrates, introducing single-strand cuts in duplex DNA close to junctions with ss-DNA. Has a preference for stem-loop (SL) and splayed arm Y structures. Introduces a single-strand cut in duplex DNA on the 3' side of a double-strand/single-strand junction with respect to the single-strand moving 3' to 5' away from the junction. Plays a critical role in maintaining the integrity of the ribosomal DNA (rDNA) loci, where it has a role in re-starting stalled replication forks. The complex initiates homologous recombination (HR) events, used to maintain rDNA copy number, in the rDNA repeats that are processed by a mechanism that requires rad22, but not rhp51. Has Holliday junction resolvase activity in vitro. Slx4 is required for efficient processing of DNA substrates. This Schizosaccharomyces pombe (strain 972 / ATCC 24843) (Fission yeast) protein is Structure-specific endonuclease subunit slx4.